Reading from the N-terminus, the 1311-residue chain is Zinc finger protein 423 (1311 aa).

The segment covering 1 to 11 (MSRRKQAKPRS) has biased composition (basic residues). 3 disordered regions span residues 1–21 (MSRR…EASD), 34–70 (GGLE…EDVE), and 95–123 (AHRC…VASP). The segment covering 41–54 (ECDRKSSRALEDRN) has biased composition (basic and acidic residues). Phosphoserine occurs at positions 55 and 58. The C2H2-type 1; degenerate zinc finger occupies 75-101 (YTCDHCQQDFESLADLTDHRAHRCPGD). The segment covering 110–123 (WVASSPSSKDVASP) has biased composition (polar residues). 7 C2H2-type zinc fingers span residues 146–168 (YPCQ…EQIH), 174–196 (FKCT…IKLH), 202–224 (YHCH…LKTH), 230–252 (FKCS…MQAH), 271–294 (FMCD…LTLH), 303–326 (LQCI…HQAH), and 331–353 (HKCP…LDSH). Residues 354–426 (RQPDSSNHSV…PLRGQKKMRD (73 aa)) are disordered. Residues 373 to 382 (ASMSSATPDS) are compositionally biased toward polar residues. Residues 390-404 (SVASMSSATPDSSAS) are compositionally biased toward low complexity. Residues 436–460 (YSCPYCSKRDFTSLAVLEIHLKTIH) form a C2H2-type 9; degenerate zinc finger. C2H2-type zinc fingers lie at residues 468-491 (HTCQ…RKLH), 507-530 (FHCN…RVSH), and 544-567 (FFCN…QQAH). Residues 590–615 (YSCPYCTNSPIFGSILKLTKHIKENH) form a C2H2-type 13; atypical zinc finger. Residues 617 to 654 (NIPLAHSKKSKAEQSPVSSDVEVSSPKRQRLSGSANSI) are disordered. Ser-631 carries the post-translational modification Phosphoserine. Low complexity predominate over residues 631-642 (SPVSSDVEVSSP). 7 consecutive C2H2-type zinc fingers follow at residues 659 to 681 (YPCN…LKLH), 689 to 711 (QACP…LTVH), 719 to 742 (YVCE…LDMH), 747 to 770 (YHCT…AVKH), 777 to 800 (YRCT…KHSH), 808 to 830 (HKCI…ITTH), and 834 to 857 (YNCR…REKH). The C2H2-type 21; degenerate zinc finger occupies 913–935 (YGCDICGAAYTMEVLLQNHRLRD). 3 consecutive C2H2-type zinc fingers follow at residues 957 to 979 (HKCN…LQTH), 986 to 1008 (YMCP…KVTH), and 1047 to 1069 (FRCV…GTFH). Ser-1081 carries the phosphoserine modification. A C2H2-type 25; degenerate zinc finger spans residues 1091 to 1109 (YKCALCLKEFRSKQDLVRL). 5 consecutive C2H2-type zinc fingers follow at residues 1147–1170 (LRCP…QVDH), 1195–1217 (YQCI…VANH), 1225–1247 (HECK…LIEH), 1256–1279 (FKCP…FAVH), and 1286–1309 (YDCS…MSQH). The segment covering 1163 to 1174 (ESHMQVDHRDLT) has biased composition (basic and acidic residues). The interval 1163–1190 (ESHMQVDHRDLTPETSGPRKGAQTSPVP) is disordered.

This sequence belongs to the krueppel C2H2-type zinc-finger protein family. As to quaternary structure, homodimer. Interacts with PARP1, SMAD1 and SMAD4. Interacts with EBF1. Interacts with CEP290. In terms of tissue distribution, expressed in brain, eye, olfactory epithelium, spleen and heart. Expressed in the basal layer, consisting of neural precursor cells and immature sensory neurons of the olfactory epithelium, but not in the mature receptor cells.

The protein resides in the nucleus. Its function is as follows. Transcription factor that can both act as an activator or a repressor depending on the context. Plays a central role in BMP signaling and olfactory neurogenesis. Associates with SMADs in response to BMP2 leading to activate transcription of BMP target genes. Acts as a transcriptional repressor via its interaction with EBF1, a transcription factor involved in terminal olfactory receptor neurons differentiation; this interaction preventing EBF1 to bind DNA and activate olfactory-specific genes. Involved in olfactory neurogenesis by participating in a developmental switch that regulates the transition from differentiation to maturation in olfactory receptor neurons. Controls proliferation and differentiation of neural precursors in cerebellar vermis formation. This chain is Zinc finger protein 423 (Znf423), found in Rattus norvegicus (Rat).